A 501-amino-acid chain; its full sequence is Probable cytosol aminopeptidase (501 aa).

Mn(2+) contacts are provided by K268 and D273. Residue K280 is part of the active site. The Mn(2+) site is built by D291, D350, and E352. R354 is a catalytic residue.

The protein belongs to the peptidase M17 family. It depends on Mn(2+) as a cofactor.

It is found in the cytoplasm. The enzyme catalyses Release of an N-terminal amino acid, Xaa-|-Yaa-, in which Xaa is preferably Leu, but may be other amino acids including Pro although not Arg or Lys, and Yaa may be Pro. Amino acid amides and methyl esters are also readily hydrolyzed, but rates on arylamides are exceedingly low.. The catalysed reaction is Release of an N-terminal amino acid, preferentially leucine, but not glutamic or aspartic acids.. In terms of biological role, presumably involved in the processing and regular turnover of intracellular proteins. Catalyzes the removal of unsubstituted N-terminal amino acids from various peptides. This Idiomarina loihiensis (strain ATCC BAA-735 / DSM 15497 / L2-TR) protein is Probable cytosol aminopeptidase.